The chain runs to 401 residues: Probable trafficking protein particle complex subunit 13 homolog (401 aa).

It belongs to the TRAPPC13 family.

This Caenorhabditis elegans protein is Probable trafficking protein particle complex subunit 13 homolog.